The sequence spans 197 residues: Penicillin-binding protein activator LpoB (197 aa).

The first 17 residues, 1-17 (MIKRMSGIALAALLLSG), serve as a signal peptide directing secretion. Cys-18 carries the N-palmitoyl cysteine lipid modification. Residue Cys-18 is the site of S-diacylglycerol cysteine attachment. Positions 23–57 (PRGETPSQPPAPTTPAKPSVVPTPTPPVVTPVPQP) are disordered. Positions 29-57 (SQPPAPTTPAKPSVVPTPTPPVVTPVPQP) are enriched in pro residues.

Belongs to the LpoB family. In terms of assembly, interacts with PBP1b.

It localises to the cell outer membrane. Its function is as follows. Regulator of peptidoglycan synthesis that is essential for the function of penicillin-binding protein 1B (PBP1b). The sequence is that of Penicillin-binding protein activator LpoB from Edwardsiella piscicida.